Consider the following 948-residue polypeptide: MSEYKDTLNLPETGFPMRGDLAKREPEMLKRWYQEDLYGEIRKAKKGKKSFVLHDGPPYANGDIHIGHALNKILKDIIIKSKTLSGFDAPYVPGWDCHGLPIELMVEKKVGKPGQKVTAAEFREKCREYAAGQVEGQKESFKRLGIMGEWDKPYRTMDFTTEANIIRALGQIADNGHLLKGFKPVHWCTDCGSALAEAEVEYKNKVSPSIDVRFKAADEAALLAKFSLNEGHQGQGDVSIVIWTTTPWTLPANRAVCLRDDLEYVLIQVEGDNPERIIVAAELAKDVMDRAGIEHFHNLGFAKGADLELTQFQHPFYDFTVPAILGDHVTTDSGTGVVHTAPGHGQEDFAVGQKYNLEVANPVGSNGVYLPDTELFAGQHVFKANDAVVETLKEKGALLHHHAYEHSYPHCWRHKTPIIFRATPQWFVSMDQAGLRAKALESIKGVQWMPEWGQSRIEGMIEGRPEWCISRQRTWGVPIALFVHKETAELHPNTSELIEKVAQVVEQKGIQAWWDIDAAELLGDDAAQYEKVLDTLDVWFDSGVTHYAVVDKREEFNGAEADMYLEGSDQHRGWFQSSLISSIAMKGKAPYKQVLTHGFVVDGHGRKMSKSIGNVVAPKDVTNKLGADILRLWVASTDYTGEVAVSDEILKRSADAYRRIRNTARFFLANLNGFNPETDIVPVEEMVALDRWAVGRALAAQNEIVKAYDEYNTHAVTQRLMHFCSIEMGSFYLDVIKDRQYTAKLGGHAQRSCQTALYYIVEALVRWMAPIMSFTADEIWNQMPASLPSGESRDKFVFTGEWFDGLFGLAEGEELNNAFWSEMQKVRGAVNKLLEAARSDKTIGGSLQAELTLFADDALAAKINKLEDELRFVLLTSAATVKPLSEKSDAAQATDIEGLFVEVRATEAEKCDRCWHHTPDVGTIEGHEKICGRCVSNVDGEGEARKFA.

Positions 58–68 match the 'HIGH' region motif; sequence PYANGDIHIGH. Glu566 contacts L-isoleucyl-5'-AMP. The short motif at 607 to 611 is the 'KMSKS' region element; that stretch reads KMSKS. Residue Lys610 participates in ATP binding. The Zn(2+) site is built by Cys911, Cys914, Cys931, and Cys934.

Belongs to the class-I aminoacyl-tRNA synthetase family. IleS type 1 subfamily. As to quaternary structure, monomer. Requires Zn(2+) as cofactor.

The protein localises to the cytoplasm. The enzyme catalyses tRNA(Ile) + L-isoleucine + ATP = L-isoleucyl-tRNA(Ile) + AMP + diphosphate. Its function is as follows. Catalyzes the attachment of isoleucine to tRNA(Ile). As IleRS can inadvertently accommodate and process structurally similar amino acids such as valine, to avoid such errors it has two additional distinct tRNA(Ile)-dependent editing activities. One activity is designated as 'pretransfer' editing and involves the hydrolysis of activated Val-AMP. The other activity is designated 'posttransfer' editing and involves deacylation of mischarged Val-tRNA(Ile). The sequence is that of Isoleucine--tRNA ligase from Vibrio vulnificus (strain YJ016).